Consider the following 338-residue polypeptide: Glycerol-3-phosphate dehydrogenase [NAD(P)+] (338 aa).

NADPH-binding residues include serine 14, tyrosine 15, histidine 35, and lysine 109. The sn-glycerol 3-phosphate site is built by lysine 109, glycine 138, and threonine 140. Alanine 142 is a binding site for NADPH. Positions 194, 247, 257, 258, and 259 each coordinate sn-glycerol 3-phosphate. The active-site Proton acceptor is lysine 194. NADPH is bound at residue arginine 258. Residues valine 282 and glutamate 284 each contribute to the NADPH site.

It belongs to the NAD-dependent glycerol-3-phosphate dehydrogenase family.

The protein resides in the cytoplasm. It catalyses the reaction sn-glycerol 3-phosphate + NAD(+) = dihydroxyacetone phosphate + NADH + H(+). The catalysed reaction is sn-glycerol 3-phosphate + NADP(+) = dihydroxyacetone phosphate + NADPH + H(+). Its pathway is membrane lipid metabolism; glycerophospholipid metabolism. Catalyzes the reduction of the glycolytic intermediate dihydroxyacetone phosphate (DHAP) to sn-glycerol 3-phosphate (G3P), the key precursor for phospholipid synthesis. The chain is Glycerol-3-phosphate dehydrogenase [NAD(P)+] from Shewanella putrefaciens (strain CN-32 / ATCC BAA-453).